The chain runs to 461 residues: tRNA modification GTPase MnmE (461 aa).

Residues K32, E89, and K128 each contribute to the (6S)-5-formyl-5,6,7,8-tetrahydrofolate site. The TrmE-type G domain occupies 224 to 387 (GHALSIVGKP…LSQKISEFFP (164 aa)). N234 contributes to the K(+) binding site. Residues 234–239 (NAGKSS), 253–259 (SDIKGTT), and 278–281 (DTAG) each bind GTP. Residue S238 participates in Mg(2+) binding. Residues S253, I255, and T258 each coordinate K(+). Mg(2+) is bound at residue T259. K461 is a binding site for (6S)-5-formyl-5,6,7,8-tetrahydrofolate.

Belongs to the TRAFAC class TrmE-Era-EngA-EngB-Septin-like GTPase superfamily. TrmE GTPase family. In terms of assembly, homodimer. Heterotetramer of two MnmE and two MnmG subunits. Requires K(+) as cofactor.

The protein localises to the cytoplasm. Its function is as follows. Exhibits a very high intrinsic GTPase hydrolysis rate. Involved in the addition of a carboxymethylaminomethyl (cmnm) group at the wobble position (U34) of certain tRNAs, forming tRNA-cmnm(5)s(2)U34. The protein is tRNA modification GTPase MnmE of Helicobacter pylori (strain J99 / ATCC 700824) (Campylobacter pylori J99).